Consider the following 1163-residue polypeptide: Carbamoyl phosphate synthase large chain (1163 aa).

The segment at methionine 1–glutamate 456 is carboxyphosphate synthetic domain. Residue arginine 129 participates in ATP binding. A disordered region spans residues leucine 148–lysine 170. The segment covering aspartate 153–lysine 170 has biased composition (basic and acidic residues). In terms of domain architecture, ATP-grasp 1 spans leucine 185 to valine 381. Residues arginine 222, glycine 228, glycine 229, glutamate 261, valine 263, glutamate 268, glycine 294, valine 295, histidine 296, glutamine 338, and glutamate 352 each contribute to the ATP site. The Mg(2+) site is built by glutamine 338, glutamate 352, and asparagine 354. Mn(2+) contacts are provided by glutamine 338, glutamate 352, and asparagine 354. The tract at residues threonine 457–alanine 614 is oligomerization domain. A carbamoyl phosphate synthetic domain region spans residues glutamine 615–glycine 1026. The ATP-grasp 2 domain occupies glutamine 743–alanine 955. 10 residues coordinate ATP: arginine 779, serine 839, leucine 841, glutamate 846, glycine 871, isoleucine 872, histidine 873, serine 874, glutamine 914, and glutamate 926. Mg(2+)-binding residues include glutamine 914, glutamate 926, and asparagine 928. The Mn(2+) site is built by glutamine 914, glutamate 926, and asparagine 928. The MGS-like domain occupies valine 1027–threonine 1163. The segment at valine 1027 to threonine 1163 is allosteric domain.

Belongs to the CarB family. Composed of two chains; the small (or glutamine) chain promotes the hydrolysis of glutamine to ammonia, which is used by the large (or ammonia) chain to synthesize carbamoyl phosphate. Tetramer of heterodimers (alpha,beta)4. The cofactor is Mg(2+). Mn(2+) serves as cofactor.

It carries out the reaction hydrogencarbonate + L-glutamine + 2 ATP + H2O = carbamoyl phosphate + L-glutamate + 2 ADP + phosphate + 2 H(+). The enzyme catalyses hydrogencarbonate + NH4(+) + 2 ATP = carbamoyl phosphate + 2 ADP + phosphate + 2 H(+). It functions in the pathway amino-acid biosynthesis; L-arginine biosynthesis; carbamoyl phosphate from bicarbonate: step 1/1. It participates in pyrimidine metabolism; UMP biosynthesis via de novo pathway; (S)-dihydroorotate from bicarbonate: step 1/3. In terms of biological role, large subunit of the glutamine-dependent carbamoyl phosphate synthetase (CPSase). CPSase catalyzes the formation of carbamoyl phosphate from the ammonia moiety of glutamine, carbonate, and phosphate donated by ATP, constituting the first step of 2 biosynthetic pathways, one leading to arginine and/or urea and the other to pyrimidine nucleotides. The large subunit (synthetase) binds the substrates ammonia (free or transferred from glutamine from the small subunit), hydrogencarbonate and ATP and carries out an ATP-coupled ligase reaction, activating hydrogencarbonate by forming carboxy phosphate which reacts with ammonia to form carbamoyl phosphate. In Rhizobium meliloti (strain 1021) (Ensifer meliloti), this protein is Carbamoyl phosphate synthase large chain.